Consider the following 218-residue polypeptide: 1-Cys peroxiredoxin PER1 (218 aa).

The region spanning 4 to 164 (LTIGDTVPNL…VVRAVDSLLT (161 aa)) is the Thioredoxin domain. Catalysis depends on Cys-46, which acts as the Cysteine sulfenic acid (-SOH) intermediate. Positions 194 to 217 (KKMFPQGFETADLPSKKGYLRFTK) match the Bipartite nuclear localization signal motif.

Belongs to the peroxiredoxin family. Prx6 subfamily. As to expression, embryo and aleurone cells.

The protein localises to the nucleus. Its subcellular location is the cytoplasm. It catalyses the reaction a hydroperoxide + [thioredoxin]-dithiol = an alcohol + [thioredoxin]-disulfide + H2O. In terms of biological role, thiol-specific peroxidase that catalyzes the reduction of hydrogen peroxide and organic hydroperoxides to water and alcohols, respectively. Seems to contribute to the inhibition of germination during stress. The chain is 1-Cys peroxiredoxin PER1 (PER1) from Hordeum vulgare (Barley).